The chain runs to 332 residues: Casein kinase II subunit alpha (332 aa).

The Protein kinase domain occupies 43-327 (YEIIRKVGRG…TCQEAMAHPY (285 aa)). ATP-binding positions include 49-57 (VGRGKYSEV) and lysine 72. The active-site Proton acceptor is aspartate 160.

Belongs to the protein kinase superfamily. Ser/Thr protein kinase family. CK2 subfamily. Tetramer composed of two alpha chains, one beta chain and one beta' chain.

It catalyses the reaction L-seryl-[protein] + ATP = O-phospho-L-seryl-[protein] + ADP + H(+). The catalysed reaction is L-threonyl-[protein] + ATP = O-phospho-L-threonyl-[protein] + ADP + H(+). Its function is as follows. Catalytic subunit of a constitutively active serine/threonine-protein kinase complex that phosphorylates a large number of substrates containing acidic residues C-terminal to the phosphorylated serine or threonine. In Schizosaccharomyces pombe (strain 972 / ATCC 24843) (Fission yeast), this protein is Casein kinase II subunit alpha.